Here is a 595-residue protein sequence, read N- to C-terminus: Aspartate--tRNA(Asp/Asn) ligase (595 aa).

Position 175 (glutamate 175) interacts with L-aspartate. An aspartate region spans residues 199–202 (QQYK). Positions 221 and 454 each coordinate L-aspartate. 221-223 (RDE) lines the ATP pocket. Glutamate 488 contacts ATP. Arginine 495 is an L-aspartate binding site. 540 to 543 (GIDR) contacts ATP.

The protein belongs to the class-II aminoacyl-tRNA synthetase family. Type 1 subfamily. As to quaternary structure, homodimer.

The protein localises to the cytoplasm. The enzyme catalyses tRNA(Asx) + L-aspartate + ATP = L-aspartyl-tRNA(Asx) + AMP + diphosphate. Aspartyl-tRNA synthetase with relaxed tRNA specificity since it is able to aspartylate not only its cognate tRNA(Asp) but also tRNA(Asn). Reaction proceeds in two steps: L-aspartate is first activated by ATP to form Asp-AMP and then transferred to the acceptor end of tRNA(Asp/Asn). The protein is Aspartate--tRNA(Asp/Asn) ligase of Sinorhizobium fredii (strain NBRC 101917 / NGR234).